A 478-amino-acid chain; its full sequence is Zinc metalloproteinase/disintegrin (478 aa).

Residues 1-20 (MIEVLLVTICLAVFPYPGSS) form the signal peptide. Positions 21-190 (IILESGNVDD…KASQLYLTPE (170 aa)) are excised as a propeptide. Gln-191 is subject to Pyrrolidone carboxylic acid. The Peptidase M12B domain occupies 197 to 392 (RYIELAIVVD…SKPQCIINAP (196 aa)). Ca(2+) is bound by residues Glu-200 and Asp-284. Cystine bridges form between Cys-308-Cys-387, Cys-349-Cys-371, and Cys-351-Cys-354. A Zn(2+)-binding site is contributed by His-333. Residue Glu-334 is part of the active site. The Zn(2+) site is built by His-337 and His-343. Residues Cys-387 and Asn-390 each coordinate Ca(2+). A propeptide spanning residues 393-410 (LRTDTVSTPVSGNEFLEA) is cleaved from the precursor. Positions 400 to 478 (TPVSGNEFLE…GQSADCPRNS (79 aa)) constitute a Disintegrin domain. Disulfide bonds link Cys-414–Cys-429, Cys-416–Cys-424, Cys-423–Cys-446, Cys-437–Cys-443, Cys-442–Cys-467, and Cys-455–Cys-474. Residues 459–461 (RGD) carry the Cell attachment site motif. Residues 459 to 478 (RGDNPDDRCTGQSADCPRNS) form a disordered region. Over residues 468 to 478 (TGQSADCPRNS) the composition is skewed to polar residues.

It belongs to the venom metalloproteinase (M12B) family. P-II subfamily. P-IIa sub-subfamily. In terms of assembly, monomer. Requires Zn(2+) as cofactor. Post-translationally, not N-glycosylated. As to expression, expressed by the venom gland.

It localises to the secreted. It carries out the reaction Cleavage of 3-Asn-|-Gln-4, 10-His-|-Leu-11 and 14-Ala-|-Leu-15 in the insulin B chain, and the bond Z-Gly-Pro-|-Leu-Gly-Pro in a small molecule substrate of microbial collagenase.. Its function is as follows. Zinc protease that induces hemorrhage. In terms of biological role, inhibits platelet aggregation induced by ADP, thrombin, and collagen. Acts by inhibiting fibrinogen interaction with platelet receptors GPIIb/GPIIIa (ITGA2B/ITGB3). The protein is Zinc metalloproteinase/disintegrin of Protobothrops flavoviridis (Habu).